The chain runs to 612 residues: uncharacterized protein (612 aa).

The region spanning Glu-8–Gly-75 is the J domain. A helical transmembrane segment spans residues Ala-445–Leu-465.

The protein belongs to the DnaJ family.

Its subcellular location is the membrane. This is an uncharacterized protein from Schizosaccharomyces pombe (strain 972 / ATCC 24843) (Fission yeast).